The following is a 154-amino-acid chain: AP-1 complex subunit sigma-3 (154 aa).

This sequence belongs to the adaptor complexes small subunit family. As to quaternary structure, adaptor protein complex 1 (AP-1) is a heterotetramer composed of two large adaptins (gamma-type subunit AP1G1 and beta-type subunit AP1B1), a medium adaptin (mu-type subunit AP1M1 or AP1M2) and a small adaptin (sigma-type subunit AP1S1 or AP1S2 or AP1S3). Widely expressed.

The protein localises to the golgi apparatus. It is found in the cytoplasmic vesicle membrane. Its subcellular location is the membrane. The protein resides in the clathrin-coated pit. Functionally, subunit of clathrin-associated adaptor protein complex 1 that plays a role in protein sorting in the late-Golgi/trans-Golgi network (TGN) and/or endosomes. The AP complexes mediate both the recruitment of clathrin to membranes and the recognition of sorting signals within the cytosolic tails of transmembrane cargo molecules. Involved in TLR3 trafficking. In Homo sapiens (Human), this protein is AP-1 complex subunit sigma-3 (AP1S3).